Consider the following 147-residue polypeptide: Hemoglobin subunit delta (147 aa).

Val-2 carries the N-acetylalanine; in variant Niigata modification. The 145-residue stretch at 3 to 147 folds into the Globin domain; that stretch reads HLTPEEKTAV…VANALAHKYH (145 aa). Position 51 is a phosphoserine (Ser-51). Heme b-binding residues include His-64 and His-93.

This sequence belongs to the globin family. As to quaternary structure, heterotetramer of two alpha chains and two delta chains in adult hemoglobin A2 (HbA2). HbA2 represents less than 3.5% of adult hemoglobin. Red blood cells.

Involved in oxygen transport from the lung to the various peripheral tissues. The chain is Hemoglobin subunit delta (HBD) from Homo sapiens (Human).